Consider the following 615-residue polypeptide: Medium-chain acyl-CoA ligase ACSF2, mitochondrial (615 aa).

Residues 1 to 49 (MAVYLGMLRLGRLCVASLGARGPRTPLSRPWPNSKLQGVRAFSSGMVDC) constitute a mitochondrion transit peptide. The residue at position 179 (Lys-179) is an N6-acetyllysine. Lys-182 is subject to N6-acetyllysine; alternate. Lys-182 is subject to N6-succinyllysine; alternate. Lys-199 carries the post-translational modification N6-acetyllysine. Position 263–271 (263–271 (TSGTTGNPK)) interacts with ATP. An N6-acetyllysine mark is found at Lys-340 and Lys-398. The residue at position 478 (Lys-478) is an N6-succinyllysine. 2 residues coordinate ATP: Asp-493 and Arg-508. N6-acetyllysine is present on Lys-510. Lys-544 and Lys-570 each carry N6-acetyllysine; alternate. 2 positions are modified to N6-succinyllysine; alternate: Lys-544 and Lys-570. Residue Lys-599 participates in ATP binding. At Lys-599 the chain carries N6-succinyllysine.

Belongs to the ATP-dependent AMP-binding enzyme family.

The protein localises to the mitochondrion. It carries out the reaction a medium-chain fatty acid + ATP + CoA = a medium-chain fatty acyl-CoA + AMP + diphosphate. The enzyme catalyses octanoate + ATP + CoA = octanoyl-CoA + AMP + diphosphate. In terms of biological role, acyl-CoA synthases catalyze the initial reaction in fatty acid metabolism, by forming a thioester with CoA. Has some preference toward medium-chain substrates. Plays a role in adipocyte differentiation. The chain is Medium-chain acyl-CoA ligase ACSF2, mitochondrial from Rattus norvegicus (Rat).